Consider the following 538-residue polypeptide: Sodium/hydrogen exchanger 1 (538 aa).

Over Met1–Ser19 the chain is Cytoplasmic. A helical membrane pass occupies residues Val20–Leu40. Residues Glu41–Trp45 are Vacuolar-facing. A helical transmembrane segment spans residues Met46–Ile66. Over Ser67 to His73 the chain is Cytoplasmic. Positions Leu74–Ala94 form an intramembrane region, helical. Residues Gly95–Asn106 are Cytoplasmic-facing. Residues Phe107–Leu127 form a helical membrane-spanning segment. Over Gly128–Tyr146 the chain is Vacuolar. Intramembrane regions (helical) lie at residues Leu147–Asn166 and Leu172–Phe192. At Asn193–Leu216 the chain is on the vacuolar side. Residues Tyr217–Ile237 traverse the membrane as a helical segment. Residues Lys238–Tyr262 lie on the Cytoplasmic side of the membrane. The chain crosses the membrane as a helical span at residues Met263 to Met283. At Ser284–Thr302 the chain is on the vacuolar side. Asn290 is a glycosylation site (N-linked (GlcNAc...) asparagine). Residues Phe303–Leu323 form a helical membrane-spanning segment. Residues Asp324 to Ser342 are Cytoplasmic-facing. Residues Ser343 to Leu363 traverse the membrane as a helical segment. At Ser364–Asn378 the chain is on the vacuolar side. N-linked (GlcNAc...) asparagine glycosylation is present at Asn370. Residues Met379–Tyr399 traverse the membrane as a helical segment. At Asn400–Asn413 the chain is on the cytoplasmic side. A helical transmembrane segment spans residues Ala414–Leu434. The Vacuolar segment spans residues Thr435 to Ala538. N-linked (GlcNAc...) asparagine glycosylation occurs at Asn447. Residues Arg496–Gly518 are interaction with CML18/CAM15.

The protein belongs to the monovalent cation:proton antiporter 1 (CPA1) transporter (TC 2.A.36) family. In terms of assembly, calcium and pH-dependent interaction with CML18/CAM15 (increases when pH decreases, better at pH 5.5 than at pH 7.5). As to expression, ubiquitous, with higher levels around vascular tissues and guard cells.

The protein localises to the vacuole membrane. It localises to the endoplasmic reticulum membrane. Its subcellular location is the golgi apparatus membrane. The catalysed reaction is Na(+)(in) + H(+)(out) = Na(+)(out) + H(+)(in). It catalyses the reaction K(+)(in) + H(+)(out) = K(+)(out) + H(+)(in). In terms of biological role, acts in low affinity electroneutral exchange of protons for cations such as Na(+) or K(+) across membranes. Can also exchange Li(+) and Cs(+) with a lower affinity. Involved in vacuolar ion compartmentalization necessary for cell volume regulation and cytoplasmic Na(+) detoxification. Required during leaves expansion, probably to stimulate epidermal cell expansion. Confers competence to grow in high salinity conditions. This Arabidopsis thaliana (Mouse-ear cress) protein is Sodium/hydrogen exchanger 1 (NHX1).